The primary structure comprises 197 residues: FMN-dependent NADH:quinone oxidoreductase (197 aa).

Residues S10, 16–18 (SQS), 93–96 (MYNF), and 137–140 (TRGG) contribute to the FMN site.

It belongs to the azoreductase type 1 family. In terms of assembly, homodimer. Requires FMN as cofactor.

It catalyses the reaction 2 a quinone + NADH + H(+) = 2 a 1,4-benzosemiquinone + NAD(+). It carries out the reaction N,N-dimethyl-1,4-phenylenediamine + anthranilate + 2 NAD(+) = 2-(4-dimethylaminophenyl)diazenylbenzoate + 2 NADH + 2 H(+). Its function is as follows. Quinone reductase that provides resistance to thiol-specific stress caused by electrophilic quinones. In terms of biological role, also exhibits azoreductase activity. Catalyzes the reductive cleavage of the azo bond in aromatic azo compounds to the corresponding amines. The protein is FMN-dependent NADH:quinone oxidoreductase of Shewanella loihica (strain ATCC BAA-1088 / PV-4).